The chain runs to 150 residues: Large ribosomal subunit protein uL15 (150 aa).

Positions 18–43 (IVGRGSSSGWGKTSGKGHKGQQARSG) are disordered.

It belongs to the universal ribosomal protein uL15 family. In terms of assembly, part of the 50S ribosomal subunit.

Binds to the 23S rRNA. This Treponema denticola (strain ATCC 35405 / DSM 14222 / CIP 103919 / JCM 8153 / KCTC 15104) protein is Large ribosomal subunit protein uL15.